Reading from the N-terminus, the 592-residue chain is Putative esterase (592 aa).

Residues leucine 12–isoleucine 32 traverse the membrane as a helical segment. Asparagine 68, asparagine 83, asparagine 95, asparagine 447, and asparagine 510 each carry an N-linked (GlcNAc...) asparagine; by host glycan. The active-site Charge relay system is histidine 513. Residue asparagine 528 is glycosylated (N-linked (GlcNAc...) asparagine; by host).

Belongs to the type-B carboxylesterase/lipase family.

The protein resides in the membrane. It catalyses the reaction a carboxylic ester + H2O = an alcohol + a carboxylate + H(+). The chain is Putative esterase from Spodoptera frugiperda (Fall armyworm).